The primary structure comprises 625 residues: FMRFamide-activated amiloride-sensitive sodium channel (625 aa).

At 1–67 the chain is on the cytoplasmic side; sequence MKYTSAATKP…IVTSRDTKRK (67 aa). The chain crosses the membrane as a helical span at residues 68-89; that stretch reads VIWALLVIAGFTAATLQLSLLV. Residues 90-536 lie on the Extracellular side of the membrane; sequence RKYLQFQVVE…LADLFADIGG (447 aa). N-linked (GlcNAc...) asparagine glycans are attached at residues Asn134, Asn196, Asn303, Asn349, Asn365, Asn372, and Asn473. A helical membrane pass occupies residues 537-557; it reads TLGLWMGISVLTIMELIELVI. The Cytoplasmic portion of the chain corresponds to 558–625; that stretch reads RLTGLVFNSE…DFRRGVESPV (68 aa). Residues 570–591 form a disordered region; sequence LPRGPTTVNNNNGSNNHSQSTS. The segment covering 575-591 has biased composition (low complexity); it reads TTVNNNNGSNNHSQSTS.

This sequence belongs to the amiloride-sensitive sodium channel (TC 1.A.6) family. In terms of tissue distribution, muscle and nervous tissue.

Its subcellular location is the membrane. Its function is as follows. FMRFamide-gated ionotropic receptor. The protein is FMRFamide-activated amiloride-sensitive sodium channel of Cornu aspersum (Brown garden snail).